A 248-amino-acid polypeptide reads, in one-letter code: UPF0246 protein A1G_03985 (248 aa).

Belongs to the UPF0246 family.

The protein is UPF0246 protein A1G_03985 of Rickettsia rickettsii (strain Sheila Smith).